A 255-amino-acid chain; its full sequence is Pyrroloquinoline-quinone synthase (255 aa).

The protein belongs to the PqqC family.

It carries out the reaction 6-(2-amino-2-carboxyethyl)-7,8-dioxo-1,2,3,4,7,8-hexahydroquinoline-2,4-dicarboxylate + 3 O2 = pyrroloquinoline quinone + 2 H2O2 + 2 H2O + H(+). The protein operates within cofactor biosynthesis; pyrroloquinoline quinone biosynthesis. Ring cyclization and eight-electron oxidation of 3a-(2-amino-2-carboxyethyl)-4,5-dioxo-4,5,6,7,8,9-hexahydroquinoline-7,9-dicarboxylic-acid to PQQ. This chain is Pyrroloquinoline-quinone synthase, found in Cereibacter sphaeroides (strain ATCC 17023 / DSM 158 / JCM 6121 / CCUG 31486 / LMG 2827 / NBRC 12203 / NCIMB 8253 / ATH 2.4.1.) (Rhodobacter sphaeroides).